Here is a 306-residue protein sequence, read N- to C-terminus: Peroxisome biogenesis factor 10 (306 aa).

Residues 1-52 lie on the Peroxisomal matrix side of the membrane; it reads MHLSAHIDPLQIILCTEIDEACIQFIKSQIEGIARACGPRMQANFEGVLIPY. The helical transmembrane segment at 53–84 threads the bilayer; it reads VDVLGKFLYRACCLRYATMGEEAARIVLAKQD. The Cytoplasmic segment spans residues 85 to 147; the sequence is RSKGLVLATT…PEAVISKEKH (63 aa). A helical membrane pass occupies residues 148 to 174; that stretch reads LVYILNSFKPILLKLVSIIRFLCLTMK. At 175–202 the chain is on the peroxisomal matrix side; sequence GHCATVSQLLLGLKYISLDEINPEEKKK. Residues 203–219 form a helical membrane-spanning segment; it reads VLTLLLLLGSRLIASIL. Residues 220–306 are Cytoplasmic-facing; that stretch reads QHSNSYFDQH…SSPSKIILLR (87 aa). Positions 256, 259, 271, 273, 276, 279, 290, and 293 each coordinate Zn(2+). The RING-type zinc-finger motif lies at 256 to 294; sequence CSLCMEFIHCPAATECGHIFCWSCINGWTSKKSECPLCR.

The protein belongs to the pex2/pex10/pex12 family. In terms of assembly, component of the PEX2-PEX10-PEX12 retrotranslocation channel, composed of PEX2, PEX10 and PEX12.

The protein localises to the peroxisome membrane. The enzyme catalyses S-ubiquitinyl-[E2 ubiquitin-conjugating enzyme]-L-cysteine + [acceptor protein]-L-lysine = [E2 ubiquitin-conjugating enzyme]-L-cysteine + N(6)-ubiquitinyl-[acceptor protein]-L-lysine.. It participates in protein modification; protein ubiquitination. The E3 ubiquitin-protein ligase activity is stimulated by PEX12. Functionally, E3 ubiquitin-protein ligase component of a retrotranslocation channel required for peroxisome organization by mediating export of the PEX5 receptor from peroxisomes to the cytosol, thereby promoting PEX5 recycling. The retrotranslocation channel is composed of PEX2, PEX10 and PEX12; each subunit contributing transmembrane segments that coassemble into an open channel that specifically allows the passage of PEX5 through the peroxisomal membrane. PEX10 also regulates PEX5 recycling by acting as a E3 ubiquitin-protein ligase. When PEX5 recycling is compromised, PEX10 catalyzes polyubiquitination of PEX5 during its passage through the retrotranslocation channel, leading to its degradation. The chain is Peroxisome biogenesis factor 10 (pas4) from Schizosaccharomyces pombe (strain 972 / ATCC 24843) (Fission yeast).